The sequence spans 209 residues: Glutathione S-transferase F7 (209 aa).

The 82-residue stretch at 2–83 (AGIKVFGHPA…YIAHFYSDKG (82 aa)) folds into the GST N-terminal domain. Glutathione contacts are provided by residues 12-13 (ST), 41-42 (HK), 54-55 (KV), and 67-68 (ES). One can recognise a GST C-terminal domain in the interval 90–209 (GSKDIAGIAM…TSRPSAKKVL (120 aa)).

Belongs to the GST superfamily. Phi family.

The protein resides in the cytoplasm. It localises to the cytosol. It catalyses the reaction RX + glutathione = an S-substituted glutathione + a halide anion + H(+). In terms of biological role, may be involved in the conjugation of reduced glutathione to a wide number of exogenous and endogenous hydrophobic electrophiles and have a detoxification role against certain herbicides. The chain is Glutathione S-transferase F7 from Arabidopsis thaliana (Mouse-ear cress).